A 380-amino-acid polypeptide reads, in one-letter code: Crotonobetainyl-CoA reductase (380 aa).

Belongs to the acyl-CoA dehydrogenase family. In terms of assembly, homotetramer. FAD serves as cofactor.

The protein resides in the cytoplasm. The enzyme catalyses 4-(trimethylamino)butanoyl-CoA + oxidized [electron-transfer flavoprotein] + H(+) = crotonobetainyl-CoA + reduced [electron-transfer flavoprotein]. It participates in amine and polyamine metabolism; carnitine metabolism. Its function is as follows. Catalyzes the reduction of crotonobetainyl-CoA to gamma-butyrobetainyl-CoA. This chain is Crotonobetainyl-CoA reductase, found in Citrobacter koseri (strain ATCC BAA-895 / CDC 4225-83 / SGSC4696).